Consider the following 88-residue polypeptide: UPF0250 protein Sama_2593 (88 aa).

This sequence belongs to the UPF0250 family.

In Shewanella amazonensis (strain ATCC BAA-1098 / SB2B), this protein is UPF0250 protein Sama_2593.